Consider the following 111-residue polypeptide: Holo-[acyl-carrier-protein] synthase (111 aa).

D8 and E57 together coordinate Mg(2+).

Belongs to the P-Pant transferase superfamily. AcpS family. Mg(2+) serves as cofactor.

It localises to the cytoplasm. It carries out the reaction apo-[ACP] + CoA = holo-[ACP] + adenosine 3',5'-bisphosphate + H(+). In terms of biological role, transfers the 4'-phosphopantetheine moiety from coenzyme A to a Ser of acyl-carrier-protein. This chain is Holo-[acyl-carrier-protein] synthase, found in Mycoplasmoides gallisepticum (strain R(low / passage 15 / clone 2)) (Mycoplasma gallisepticum).